We begin with the raw amino-acid sequence, 136 residues long: Small nuclear ribonucleoprotein Sm D3 (136 aa).

The Sm domain maps to 6–78; that stretch reads VPIKILHEAE…IRFMILPDML (73 aa). The disordered stretch occupies residues 98-136; the sequence is GLGGLDQRGRGRGTAFRRPMGRGGPRGMSRPGGAPTFRG.

This sequence belongs to the snRNP core protein family.

It localises to the nucleus. The protein resides in the cytoplasm. The protein localises to the cytosol. Its function is as follows. Plays a role in pre-mRNA splicing as a core component of the spliceosomal U1, U2, U4 and U5 small nuclear ribonucleoproteins (snRNPs), the building blocks of the spliceosome. This is Small nuclear ribonucleoprotein Sm D3 (snr-1) from Caenorhabditis elegans.